The following is a 227-amino-acid chain: Atypical response regulator protein ChxR (227 aa).

One can recognise a Response regulatory domain in the interval 6–108 (HVLLVSEHWD…ILKSAISLFL (103 aa)). A DNA-binding region (ompR/PhoB-type) is located at residues 117-213 (PESIRFGPNV…LRGVGYLFSD (97 aa)).

As to quaternary structure, homodimer.

Its function is as follows. May be a global positive regulator of transcription. Binds a cis-acting element of its own promoter DNA sequence and is hence probably also involved in its own transcription activation. The recognition sequence is 5'-WHGAWNH-N(3-5)-WHGAWNH-3', where W is A/T, H is C/A/T, N is G/C/A/T and the linker length in the middle is 3 to 5 nucleotides. This Chlamydia trachomatis serovar L2 (strain ATCC VR-902B / DSM 19102 / 434/Bu) protein is Atypical response regulator protein ChxR.